Consider the following 149-residue polypeptide: MEEKRKKIRVLVGGVFDILHVGHIHFLKQAKELGDELVVIVAHDETVRMQKRREPINPAEDRAELLRAIRYVDEVYIGTPGTIDMELVKRIDPDVIAIGPDQFFNCEKLKEELRKHGINAEVIRIPYLYKSDRAKTSKIIQRIVETFCE.

Residues 15-16, 20-23, and D101 contribute to the ATP site; these read VF and HVGH.

It belongs to the archaeal FAD synthase family. Homodimer. Requires a divalent metal cation as cofactor.

The enzyme catalyses FMN + ATP + H(+) = FAD + diphosphate. It functions in the pathway cofactor biosynthesis; FAD biosynthesis; FAD from FMN: step 1/1. Functionally, catalyzes the transfer of the AMP portion of ATP to flavin mononucleotide (FMN) to produce flavin adenine dinucleotide (FAD) coenzyme. The chain is FAD synthase from Thermococcus kodakarensis (strain ATCC BAA-918 / JCM 12380 / KOD1) (Pyrococcus kodakaraensis (strain KOD1)).